A 239-amino-acid chain; its full sequence is 1-(5-phosphoribosyl)-5-[(5-phosphoribosylamino)methylideneamino] imidazole-4-carboxamide isomerase (239 aa).

The active-site Proton acceptor is D8. D129 functions as the Proton donor in the catalytic mechanism.

Belongs to the HisA/HisF family.

Its subcellular location is the cytoplasm. It catalyses the reaction 1-(5-phospho-beta-D-ribosyl)-5-[(5-phospho-beta-D-ribosylamino)methylideneamino]imidazole-4-carboxamide = 5-[(5-phospho-1-deoxy-D-ribulos-1-ylimino)methylamino]-1-(5-phospho-beta-D-ribosyl)imidazole-4-carboxamide. It participates in amino-acid biosynthesis; L-histidine biosynthesis; L-histidine from 5-phospho-alpha-D-ribose 1-diphosphate: step 4/9. The polypeptide is 1-(5-phosphoribosyl)-5-[(5-phosphoribosylamino)methylideneamino] imidazole-4-carboxamide isomerase (Legionella pneumophila subsp. pneumophila (strain Philadelphia 1 / ATCC 33152 / DSM 7513)).